The primary structure comprises 129 residues: Phosphoribosyl-AMP cyclohydrolase (129 aa).

Aspartate 76 lines the Mg(2+) pocket. Cysteine 77 is a binding site for Zn(2+). Positions 78 and 80 each coordinate Mg(2+). Residues cysteine 97 and cysteine 104 each contribute to the Zn(2+) site.

It belongs to the PRA-CH family. As to quaternary structure, homodimer. Requires Mg(2+) as cofactor. It depends on Zn(2+) as a cofactor.

The protein localises to the cytoplasm. It catalyses the reaction 1-(5-phospho-beta-D-ribosyl)-5'-AMP + H2O = 1-(5-phospho-beta-D-ribosyl)-5-[(5-phospho-beta-D-ribosylamino)methylideneamino]imidazole-4-carboxamide. Its pathway is amino-acid biosynthesis; L-histidine biosynthesis; L-histidine from 5-phospho-alpha-D-ribose 1-diphosphate: step 3/9. In terms of biological role, catalyzes the hydrolysis of the adenine ring of phosphoribosyl-AMP. This is Phosphoribosyl-AMP cyclohydrolase from Polaromonas sp. (strain JS666 / ATCC BAA-500).